The sequence spans 161 residues: 6,7-dimethyl-8-ribityllumazine synthase (161 aa).

5-amino-6-(D-ribitylamino)uracil is bound by residues Trp-31, 63–65, and 85–87; these read SFE and VVI. 90–91 is a (2S)-2-hydroxy-3-oxobutyl phosphate binding site; that stretch reads GT. His-93 serves as the catalytic Proton donor. 5-amino-6-(D-ribitylamino)uracil is bound at residue Phe-118. (2S)-2-hydroxy-3-oxobutyl phosphate is bound at residue Arg-132.

This sequence belongs to the DMRL synthase family.

It catalyses the reaction (2S)-2-hydroxy-3-oxobutyl phosphate + 5-amino-6-(D-ribitylamino)uracil = 6,7-dimethyl-8-(1-D-ribityl)lumazine + phosphate + 2 H2O + H(+). It participates in cofactor biosynthesis; riboflavin biosynthesis; riboflavin from 2-hydroxy-3-oxobutyl phosphate and 5-amino-6-(D-ribitylamino)uracil: step 1/2. Catalyzes the formation of 6,7-dimethyl-8-ribityllumazine by condensation of 5-amino-6-(D-ribitylamino)uracil with 3,4-dihydroxy-2-butanone 4-phosphate. This is the penultimate step in the biosynthesis of riboflavin. In Arthrobacter sp. (strain FB24), this protein is 6,7-dimethyl-8-ribityllumazine synthase.